The primary structure comprises 327 residues: Zinc transport protein ZntB (327 aa).

At 1 to 271 (METIYGSSLK…AMNRRTYTMS (271 aa)) the chain is on the cytoplasmic side. The chain crosses the membrane as a helical span at residues 272-292 (LLAMIFLPTTFLTGLFGVNLG). The Periplasmic segment spans residues 293–300 (GIPGNEYY). A helical transmembrane segment spans residues 301 to 321 (LGFAIFCLLLFGLVLFVAWWL). Residues 322–327 (KKSKWL) are Cytoplasmic-facing.

This sequence belongs to the CorA metal ion transporter (MIT) (TC 1.A.35) family.

It is found in the cell inner membrane. It carries out the reaction Zn(2+)(out) + H(+)(out) = Zn(2+)(in) + H(+)(in). Its function is as follows. Zinc transporter. Acts as a Zn(2+):proton symporter, which likely mediates zinc ion uptake. In Photorhabdus laumondii subsp. laumondii (strain DSM 15139 / CIP 105565 / TT01) (Photorhabdus luminescens subsp. laumondii), this protein is Zinc transport protein ZntB.